Consider the following 599-residue polypeptide: Elongation factor 4 (599 aa).

The 183-residue stretch at 2–184 (KNIRNFSIIA…RLVRDIPPPQ (183 aa)) folds into the tr-type G domain. GTP-binding positions include 14-19 (DHGKST) and 131-134 (NKID).

Belongs to the TRAFAC class translation factor GTPase superfamily. Classic translation factor GTPase family. LepA subfamily.

Its subcellular location is the cell inner membrane. It catalyses the reaction GTP + H2O = GDP + phosphate + H(+). Required for accurate and efficient protein synthesis under certain stress conditions. May act as a fidelity factor of the translation reaction, by catalyzing a one-codon backward translocation of tRNAs on improperly translocated ribosomes. Back-translocation proceeds from a post-translocation (POST) complex to a pre-translocation (PRE) complex, thus giving elongation factor G a second chance to translocate the tRNAs correctly. Binds to ribosomes in a GTP-dependent manner. This chain is Elongation factor 4, found in Salmonella paratyphi A (strain ATCC 9150 / SARB42).